A 283-amino-acid polypeptide reads, in one-letter code: Pantothenate synthetase (283 aa).

ATP is bound at residue 31 to 38; it reads MGALHDGH. H38 (proton donor) is an active-site residue. Q62 is a binding site for (R)-pantoate. Residue Q62 coordinates beta-alanine. 148 to 151 serves as a coordination point for ATP; it reads GKKD. Q154 is a binding site for (R)-pantoate. ATP-binding positions include V177 and 185–188; that span reads KSSR.

It belongs to the pantothenate synthetase family. As to quaternary structure, homodimer.

Its subcellular location is the cytoplasm. It catalyses the reaction (R)-pantoate + beta-alanine + ATP = (R)-pantothenate + AMP + diphosphate + H(+). Its pathway is cofactor biosynthesis; (R)-pantothenate biosynthesis; (R)-pantothenate from (R)-pantoate and beta-alanine: step 1/1. Functionally, catalyzes the condensation of pantoate with beta-alanine in an ATP-dependent reaction via a pantoyl-adenylate intermediate. The polypeptide is Pantothenate synthetase (Staphylococcus aureus (strain MSSA476)).